A 391-amino-acid polypeptide reads, in one-letter code: Alpha-2B adrenergic receptor (391 aa).

The helical transmembrane segment at 1–25 threads the bilayer; it reads AIAAVITFLILFTIFGNALVILAVL. Topologically, residues 26–36 are cytoplasmic; sequence TSRSLRAPQNL. Residues 37–62 form a helical membrane-spanning segment; the sequence is FLVSLAAADILVATLIIPFSLANELL. The Extracellular portion of the chain corresponds to 63 to 72; it reads GYWYFRRTWC. Cysteines 72 and 151 form a disulfide. The chain crosses the membrane as a helical span at residues 73-95; the sequence is EVYLALDVLFCTSSIVHLCAISL. Topologically, residues 96–117 are cytoplasmic; it reads DRYWAVSRALEYNSKRTPRRIK. A helical transmembrane segment spans residues 118–140; it reads CIILTVWLIAAVISLPPLIYKGD. At 141–156 the chain is on the extracellular side; sequence QGPQPRGRPQCKLNQE. The helical transmembrane segment at 157 to 180 threads the bilayer; sequence AWYILASSIGSFFAPCLIMILVYL. At 181-355 the chain is on the cytoplasmic side; that stretch reads RIYLIAKRSH…LTREKRFTFV (175 aa). 2 disordered regions span residues 194-218 and 233-312; these read PRAK…APSS and EANR…PLQQ. Residues 233-247 are compositionally biased toward basic and acidic residues; the sequence is EANRHSKSTGEKVEG. Over residues 256–266 the composition is skewed to pro residues; the sequence is PGVPPSWPPLP. The span at 271–281 shows a compositional bias: basic and acidic residues; that stretch reads GQEEDIYRASP. Positions 282–294 are enriched in acidic residues; sequence EEEAGDDEEEECE. Residues 295–309 show a composition bias toward low complexity; sequence PQAVPVSPASACSPP. Residues 356-379 traverse the membrane as a helical segment; that stretch reads LAVVIGVFVLCWFPFFFSYSLGAI. Over 380–388 the chain is Extracellular; that stretch reads CPQHCKVPH. A helical transmembrane segment spans residues 389–391; that stretch reads GLF.

The protein belongs to the G-protein coupled receptor 1 family. Adrenergic receptor subfamily. ADRA2B sub-subfamily. Interacts with RAB26. Interacts with PPP1R9B. Interacts with GGA1, GGA2 and GGA3.

It localises to the cell membrane. Its function is as follows. Alpha-2 adrenergic receptors mediate the catecholamine-induced inhibition of adenylate cyclase through the action of G proteins. In Erinaceus europaeus (Western European hedgehog), this protein is Alpha-2B adrenergic receptor (ADRA2B).